A 400-amino-acid polypeptide reads, in one-letter code: Subtilisin-like protease 7 (400 aa).

Positions 1 to 20 (MGFITKAIPLALAAASVING) are cleaved as a signal peptide. Residues 21-119 (AEILETRAGV…IERDARVQIN (99 aa)) constitute a propeptide that is removed on maturation. Residues 36 to 118 (KYIVVMNDGI…YIERDARVQI (83 aa)) enclose the Inhibitor I9 domain. The Peptidase S8 domain maps to 129-400 (SWGLARVGSK…SKLINNGSGM (272 aa)). Catalysis depends on charge relay system residues Asp161 and His192. A glycan (N-linked (GlcNAc...) asparagine) is linked at Asn252. Ser346 acts as the Charge relay system in catalysis. Asn396 carries an N-linked (GlcNAc...) asparagine glycan.

This sequence belongs to the peptidase S8 family.

It is found in the secreted. Secreted subtilisin-like serine protease with keratinolytic activity that contributes to pathogenicity. The chain is Subtilisin-like protease 7 (SUB7) from Trichophyton violaceum.